A 140-amino-acid chain; its full sequence is Transmembrane protein 107 (140 aa).

2 consecutive transmembrane segments (helical) span residues 7 to 27 (LVPS…TLFW) and 53 to 73 (LVAA…GFLS). Asn79 is a glycosylation site (N-linked (GlcNAc...) asparagine). A run of 2 helical transmembrane segments spans residues 83-103 (SLLS…FIFE) and 113-133 (IFAF…IAVF).

In terms of assembly, part of the tectonic-like complex (also named B9 complex). Interacts with TMEM237, TMEM231, MKS1 and TMEM216.

The protein resides in the membrane. The protein localises to the cell projection. It is found in the cilium. In terms of biological role, plays a role in cilia formation and embryonic patterning. Requires for normal Sonic hedgehog (Shh) signaling in the neural tube and acts in combination with GLI2 and GLI3 to pattern ventral and intermediate neuronal cell types. During ciliogenesis regulates the ciliary transition zone localization of some MKS complex proteins. This chain is Transmembrane protein 107, found in Rattus norvegicus (Rat).